The primary structure comprises 297 residues: Lipoprotein NlpD/LppB homolog (297 aa).

Residues 1-22 (MDKGEGLRLAATLRQWTRLYGG) form the signal peptide. Residue cysteine 23 is the site of N-palmitoyl cysteine attachment. Residue cysteine 23 is the site of S-diacylglycerol cysteine attachment. The region spanning 67 to 111 (GQYIVRRGDTLYSIAFRFGWDWKALAARNGIAPPYTIQVGQAIQF) is the LysM domain. The tract at residues 134-168 (TKPTPVPPAVSTSVPAKPAPAPASTTTPPSSGATP) is disordered.

The protein belongs to the E.coli NlpD/Haemophilus LppB family.

It is found in the cell inner membrane. The chain is Lipoprotein NlpD/LppB homolog from Pseudomonas aeruginosa (strain ATCC 15692 / DSM 22644 / CIP 104116 / JCM 14847 / LMG 12228 / 1C / PRS 101 / PAO1).